A 199-amino-acid polypeptide reads, in one-letter code: NAD(P)H dehydrogenase (quinone) (199 aa).

The region spanning 4–190 (MLVLYYSAYG…DGARFQGRRV (187 aa)) is the Flavodoxin-like domain. Residues 10-15 (SAYGYM) and 78-80 (TRY) contribute to the FMN site. NAD(+) is bound at residue Y12. W98 lines the substrate pocket. FMN is bound by residues 113 to 119 (STATQHG) and H134. The disordered stretch occupies residues 158–181 (GAPYGMTTTADGDGSRQPSAQELD). The span at 163–177 (MTTTADGDGSRQPSA) shows a compositional bias: polar residues.

This sequence belongs to the WrbA family. FMN is required as a cofactor.

The enzyme catalyses a quinone + NADH + H(+) = a quinol + NAD(+). The catalysed reaction is a quinone + NADPH + H(+) = a quinol + NADP(+). The chain is NAD(P)H dehydrogenase (quinone) from Brucella abortus (strain S19).